The following is a 573-amino-acid chain: Putative cytochrome c oxidase subunit 1-beta (573 aa).

Residues 53–73 traverse the membrane as a helical segment; sequence VIGHLYLATSFGFFLLGGVLA. A Fe(II)-heme a-binding site is contributed by His100. The next 6 helical transmembrane spans lie at 103 to 123, 141 to 161, 188 to 208, 227 to 247, 272 to 292, and 304 to 324; these read IMMLLFATPLFAGFTNVIMPL, WMYLFGGLMVVSGFLTPGGAA, GLVVSGVSTTLSAVNFISTII, ILFTSILVLPAFPVLTAALLM, LFWFFGHPEVYIVALPFFGIV, and IFGYVSLVGATIAITFLSAVV. 2 residues coordinate Cu cation: His278 and Tyr282. Residues 278–282 constitute a cross-link (1'-histidyl-3'-tyrosine (His-Tyr)); that stretch reads HPEVY. Cu cation-binding residues include His327 and His328. Transmembrane regions (helical) follow at residues 329 to 349 and 373 to 393; these read MFATGAVLLPFFSLMSFLIAV and MLWACGFLVTFLLGGMSGVLI. Heme a3 is bound at residue His411. Helical transmembrane passes span 412-432, 447-467, and 490-510; these read LHYVLFGTVVFAMFAGFYFWW, IHFWTLFVGFQTTFLVQHWLG, and ISSIGAFLLGLSTLPFLYNVW. Position 413 (His413) interacts with Fe(II)-heme a.

This sequence belongs to the heme-copper respiratory oxidase family. As to quaternary structure, associates with subunits II, III and IV to form cytochrome c oxidase. Requires Cu(2+) as cofactor. Heme is required as a cofactor.

It localises to the cell membrane. It catalyses the reaction 4 Fe(II)-[cytochrome c] + O2 + 8 H(+)(in) = 4 Fe(III)-[cytochrome c] + 2 H2O + 4 H(+)(out). The protein operates within energy metabolism; oxidative phosphorylation. In terms of biological role, cytochrome c oxidase is the component of the respiratory chain that catalyzes the reduction of oxygen to water. Subunits 1-3 form the functional core of the enzyme complex. CO I is the catalytic subunit of the enzyme. Electrons originating in cytochrome c are transferred via the copper A center of subunit 2 and heme A of subunit 1 to the bimetallic center formed by heme A3 and copper B. The protein is Putative cytochrome c oxidase subunit 1-beta (ctaD2) of Streptomyces coelicolor (strain ATCC BAA-471 / A3(2) / M145).